Here is an 88-residue protein sequence, read N- to C-terminus: UPF0297 protein YrzL (88 aa).

It belongs to the UPF0297 family.

The chain is UPF0297 protein YrzL (yrzL) from Bacillus subtilis (strain 168).